We begin with the raw amino-acid sequence, 132 residues long: MKHRDIRKVIIDALESAIGTDAIYFDGRPAVLEEGDFPAVAVYLTDAEYTGEELDADTWQAILHIEVFLEAQVPDSELDDWMETRVYPVLAEVPGLESLITTMVQQGYDYQRDDDMALWSSADLKYSITYDM.

Belongs to the lambda-like tail terminator protein family. Homohexamer. May bind to major tail protein and /or tape measure protein.

It localises to the virion. Its subcellular location is the host cytoplasm. Functionally, plays an essential role in tail assembly by capping the rapidly polymerizing tail once it has reached its requisite length and serving as the interaction surface for the completion protein. This chain is Tail tube terminator protein, found in Escherichia phage N15 (Bacteriophage N15).